Here is a 643-residue protein sequence, read N- to C-terminus: Threonine--tRNA ligase (643 aa).

The TGS domain occupies 3–64 (DVVKITFPDG…EEDGAISIIT (62 aa)). The interval 245–542 (DHRKLGKELD…LIEEYKGAFP (298 aa)) is catalytic. Zn(2+)-binding residues include cysteine 338, histidine 389, and histidine 519.

This sequence belongs to the class-II aminoacyl-tRNA synthetase family. As to quaternary structure, homodimer. The cofactor is Zn(2+).

The protein resides in the cytoplasm. The catalysed reaction is tRNA(Thr) + L-threonine + ATP = L-threonyl-tRNA(Thr) + AMP + diphosphate + H(+). Functionally, catalyzes the attachment of threonine to tRNA(Thr) in a two-step reaction: L-threonine is first activated by ATP to form Thr-AMP and then transferred to the acceptor end of tRNA(Thr). Also edits incorrectly charged L-seryl-tRNA(Thr). The protein is Threonine--tRNA ligase of Anoxybacillus flavithermus (strain DSM 21510 / WK1).